The following is a 487-amino-acid chain: Transcription factor GTE5, chloroplastic (487 aa).

The N-terminal 32 residues, 1–32 (MSSEHISGGGASKTKKHKWSSSQNRPKPMGVS), are a transit peptide targeting the chloroplast. Disordered regions lie at residues 1–48 (MSSE…NSFA), 93–127 (ANPG…GADK), and 400–487 (KNEA…DNGN). Positions 127 to 233 (KGTVQIFKNC…NMFEDKWVSI (107 aa)) constitute a Bromo domain. The 82-residue stretch at 320-401 (EEEAPVNNRD…GYKESLSKKN (82 aa)) folds into the NET domain. The segment covering 400–414 (KNEAHGFGSERDAES) has biased composition (basic and acidic residues). Residues 415 to 435 (VHNSIQEPTTLVSGTTTSRVT) show a composition bias toward polar residues. The segment covering 451–487 (NNASGSSSSNSSSSDSGSCSSDTDSDSSSGRGSDNGN) has biased composition (low complexity).

As to quaternary structure, interacts with SIZ1 (via PHD domain). Sumoylated by SIZ1.

It is found in the plastid. The protein resides in the chloroplast. This Arabidopsis thaliana (Mouse-ear cress) protein is Transcription factor GTE5, chloroplastic (GTE5).